The sequence spans 285 residues: NAD kinase (285 aa).

Residue D76 is the Proton acceptor of the active site. NAD(+)-binding positions include 76-77 (DG), 151-152 (NE), H162, R179, D181, 192-197 (TAYSLS), and Q252.

Belongs to the NAD kinase family. A divalent metal cation serves as cofactor.

The protein resides in the cytoplasm. The catalysed reaction is NAD(+) + ATP = ADP + NADP(+) + H(+). Functionally, involved in the regulation of the intracellular balance of NAD and NADP, and is a key enzyme in the biosynthesis of NADP. Catalyzes specifically the phosphorylation on 2'-hydroxyl of the adenosine moiety of NAD to yield NADP. This is NAD kinase from Haemophilus influenzae (strain ATCC 51907 / DSM 11121 / KW20 / Rd).